Here is a 194-residue protein sequence, read N- to C-terminus: Peptidyl-tRNA hydrolase (194 aa).

Tyr16 contributes to the tRNA binding site. His21 acts as the Proton acceptor in catalysis. TRNA contacts are provided by Phe67, Asn69, and Asn115.

This sequence belongs to the PTH family. In terms of assembly, monomer.

It is found in the cytoplasm. The catalysed reaction is an N-acyl-L-alpha-aminoacyl-tRNA + H2O = an N-acyl-L-amino acid + a tRNA + H(+). Functionally, hydrolyzes ribosome-free peptidyl-tRNAs (with 1 or more amino acids incorporated), which drop off the ribosome during protein synthesis, or as a result of ribosome stalling. Its function is as follows. Catalyzes the release of premature peptidyl moieties from peptidyl-tRNA molecules trapped in stalled 50S ribosomal subunits, and thus maintains levels of free tRNAs and 50S ribosomes. The chain is Peptidyl-tRNA hydrolase from Shigella boydii serotype 4 (strain Sb227).